We begin with the raw amino-acid sequence, 1362 residues long: DNA-directed RNA polymerase subunit beta'' (1362 aa).

Zn(2+)-binding residues include Cys-224, Cys-295, Cys-302, and Cys-305.

Belongs to the RNA polymerase beta' chain family. RpoC2 subfamily. In plastids the minimal PEP RNA polymerase catalytic core is composed of four subunits: alpha, beta, beta', and beta''. When a (nuclear-encoded) sigma factor is associated with the core the holoenzyme is formed, which can initiate transcription. It depends on Zn(2+) as a cofactor.

Its subcellular location is the plastid. It is found in the chloroplast. The catalysed reaction is RNA(n) + a ribonucleoside 5'-triphosphate = RNA(n+1) + diphosphate. Its function is as follows. DNA-dependent RNA polymerase catalyzes the transcription of DNA into RNA using the four ribonucleoside triphosphates as substrates. The chain is DNA-directed RNA polymerase subunit beta'' from Helianthus annuus (Common sunflower).